Consider the following 254-residue polypeptide: uncharacterized protein (254 aa).

The next 8 membrane-spanning stretches (helical) occupy residues 41 to 61 (LFVF…IKII), 64 to 84 (ILQA…EYFF), 91 to 111 (IYCG…LYIL), 125 to 145 (LLIS…FVLA), 146 to 166 (PAAL…LWSF), 172 to 192 (FILL…IQLL), 204 to 224 (MIRA…ILTP), and 232 to 252 (LIMS…LLVL).

The protein belongs to the TatC family.

The protein resides in the plastid. Its subcellular location is the chloroplast membrane. This is an uncharacterized protein from Pyropia yezoensis (Susabi-nori).